Consider the following 320-residue polypeptide: Phosphoribosylaminoimidazole-succinocarboxamide synthase (320 aa).

The segment at 283–303 (ESDWDRNSPPPPLPESIAHQT) is disordered.

It belongs to the SAICAR synthetase family.

It carries out the reaction 5-amino-1-(5-phospho-D-ribosyl)imidazole-4-carboxylate + L-aspartate + ATP = (2S)-2-[5-amino-1-(5-phospho-beta-D-ribosyl)imidazole-4-carboxamido]succinate + ADP + phosphate + 2 H(+). It participates in purine metabolism; IMP biosynthesis via de novo pathway; 5-amino-1-(5-phospho-D-ribosyl)imidazole-4-carboxamide from 5-amino-1-(5-phospho-D-ribosyl)imidazole-4-carboxylate: step 1/2. The polypeptide is Phosphoribosylaminoimidazole-succinocarboxamide synthase (Rhodopirellula baltica (strain DSM 10527 / NCIMB 13988 / SH1)).